The chain runs to 438 residues: Chromosomal replication initiator protein DnaA (438 aa).

A domain I, interacts with DnaA modulators region spans residues 1–68; the sequence is MKDNILSALK…VVKESLGKDA (68 aa). Positions 68–98 are domain II; sequence ATFEIVYKEIDITQENEEKGPLVRKRPLLIT. Residues 99–314 form a domain III, AAA+ region region; it reads PLNPKYTFEN…GAILKLIAYK (216 aa). The ATP site is built by Gly142, Gly144, Lys145, and Thr146. Positions 315–438 are domain IV, binds dsDNA; it reads NLYGSLNLSI…TKNFAQGESI (124 aa).

Belongs to the DnaA family. As to quaternary structure, oligomerizes as a right-handed, spiral filament on DNA at oriC.

It localises to the cytoplasm. Functionally, plays an essential role in the initiation and regulation of chromosomal replication. ATP-DnaA binds to the origin of replication (oriC) to initiate formation of the DNA replication initiation complex once per cell cycle. Binds the DnaA box (a 9 base pair repeat at the origin) and separates the double-stranded (ds)DNA. Forms a right-handed helical filament on oriC DNA; dsDNA binds to the exterior of the filament while single-stranded (ss)DNA is stabiized in the filament's interior. The ATP-DnaA-oriC complex binds and stabilizes one strand of the AT-rich DNA unwinding element (DUE), permitting loading of DNA polymerase. After initiation quickly degrades to an ADP-DnaA complex that is not apt for DNA replication. Binds acidic phospholipids. The sequence is that of Chromosomal replication initiator protein DnaA from Thermosipho africanus (strain TCF52B).